We begin with the raw amino-acid sequence, 510 residues long: NAD(P)H-quinone oxidoreductase subunit 2, chloroplastic (510 aa).

12 helical membrane passes run 24-44 (LLLF…GLIL), 59-79 (WFYF…LFRW), 99-119 (IFQF…VEYI), 124-144 (MAIT…MFLC), 149-169 (LITI…LSGY), 184-204 (LLMG…LYGL), 229-249 (ISIA…PAPF), 295-315 (WHLL…LIAI), 323-343 (MLAY…IVGD), 347-367 (GYAS…GTFA), 395-415 (ALSL…AGFF), and 418-438 (LHLF…IGLL).

The protein belongs to the complex I subunit 2 family. NDH is composed of at least 16 different subunits, 5 of which are encoded in the nucleus.

Its subcellular location is the plastid. It localises to the chloroplast thylakoid membrane. It catalyses the reaction a plastoquinone + NADH + (n+1) H(+)(in) = a plastoquinol + NAD(+) + n H(+)(out). The enzyme catalyses a plastoquinone + NADPH + (n+1) H(+)(in) = a plastoquinol + NADP(+) + n H(+)(out). In terms of biological role, NDH shuttles electrons from NAD(P)H:plastoquinone, via FMN and iron-sulfur (Fe-S) centers, to quinones in the photosynthetic chain and possibly in a chloroplast respiratory chain. The immediate electron acceptor for the enzyme in this species is believed to be plastoquinone. Couples the redox reaction to proton translocation, and thus conserves the redox energy in a proton gradient. This Muilla maritima (Sea muilla) protein is NAD(P)H-quinone oxidoreductase subunit 2, chloroplastic.